The primary structure comprises 28 residues: Omega-gliadin (28 aa).

Positions 1 to 28 (ARQLNPSDQELQSPQQLYPQQPYPQQPY) are disordered. Low complexity predominate over residues 9-20 (QELQSPQQLYPQ).

This chain is Omega-gliadin, found in Triticum monococcum (Einkorn wheat).